We begin with the raw amino-acid sequence, 203 residues long: A-type ATP synthase subunit E (203 aa).

It belongs to the V-ATPase E subunit family. As to quaternary structure, has multiple subunits with at least A(3), B(3), C, D, E, F, H, I and proteolipid K(x).

Its subcellular location is the cell membrane. In terms of biological role, component of the A-type ATP synthase that produces ATP from ADP in the presence of a proton gradient across the membrane. This is A-type ATP synthase subunit E from Thermococcus onnurineus (strain NA1).